A 286-amino-acid polypeptide reads, in one-letter code: ATP synthase gamma chain (286 aa).

It belongs to the ATPase gamma chain family. As to quaternary structure, F-type ATPases have 2 components, CF(1) - the catalytic core - and CF(0) - the membrane proton channel. CF(1) has five subunits: alpha(3), beta(3), gamma(1), delta(1), epsilon(1). CF(0) has three main subunits: a, b and c.

It localises to the cell inner membrane. Its function is as follows. Produces ATP from ADP in the presence of a proton gradient across the membrane. The gamma chain is believed to be important in regulating ATPase activity and the flow of protons through the CF(0) complex. In Marinomonas sp. (strain MWYL1), this protein is ATP synthase gamma chain.